A 140-amino-acid polypeptide reads, in one-letter code: Small ribosomal subunit protein uS12 (140 aa).

The tract at residues 1-20 (MPTINQLVRKGRQSKVVKSD) is disordered. D102 carries the post-translational modification 3-methylthioaspartic acid. The interval 121–140 (DGRMQGRSKYGTKRPKAAKK) is disordered. The span at 130–140 (YGTKRPKAAKK) shows a compositional bias: basic residues.

This sequence belongs to the universal ribosomal protein uS12 family. In terms of assembly, part of the 30S ribosomal subunit. Contacts proteins S8 and S17. May interact with IF1 in the 30S initiation complex.

In terms of biological role, with S4 and S5 plays an important role in translational accuracy. Functionally, interacts with and stabilizes bases of the 16S rRNA that are involved in tRNA selection in the A site and with the mRNA backbone. Located at the interface of the 30S and 50S subunits, it traverses the body of the 30S subunit contacting proteins on the other side and probably holding the rRNA structure together. The combined cluster of proteins S8, S12 and S17 appears to hold together the shoulder and platform of the 30S subunit. This Exiguobacterium sibiricum (strain DSM 17290 / CCUG 55495 / CIP 109462 / JCM 13490 / 255-15) protein is Small ribosomal subunit protein uS12.